The following is a 174-amino-acid chain: UPF0316 protein lwe1794 (174 aa).

3 helical membrane passes run Gly-4–Val-24, Leu-36–Leu-56, and Ile-62–Ile-82.

This sequence belongs to the UPF0316 family.

It is found in the cell membrane. The polypeptide is UPF0316 protein lwe1794 (Listeria welshimeri serovar 6b (strain ATCC 35897 / DSM 20650 / CCUG 15529 / CIP 8149 / NCTC 11857 / SLCC 5334 / V8)).